The chain runs to 347 residues: 5-deoxyribose 1-phosphate isomerase (347 aa).

Substrate contacts are provided by residues 48-50, R91, and Q198; that span reads RGA. The Proton donor role is filled by D239. 249–250 contributes to the substrate binding site; it reads NK.

It belongs to the EIF-2B alpha/beta/delta subunits family. DrdI subfamily.

It catalyses the reaction 5-deoxy-alpha-D-ribose 1-phosphate = 5-deoxy-D-ribulose 1-phosphate. Its pathway is carbohydrate degradation. Its function is as follows. Catalyzes the isomerization of 5-deoxy-alpha-D-ribose 1-phosphate to 5-deoxy-D-ribulose 1-phosphate, as part of a 5-deoxyribose salvage pathway that recycles this toxic radical SAM enzyme by-product to mainstream metabolites. The protein is 5-deoxyribose 1-phosphate isomerase of Bacillus thuringiensis subsp. konkukian (strain 97-27).